A 101-amino-acid chain; its full sequence is Glutenin, high molecular weight subunit PC256 (101 aa).

The segment covering 1 to 27 has biased composition (polar residues); the sequence is EKLGQGQQPRQWLQPRQGQQGYYPTSP. The disordered stretch occupies residues 1-65; that stretch reads EKLGQGQQPR…QGYDSPYHVS (65 aa). Over residues 41–62 the composition is skewed to low complexity; the sequence is QGYYPTSPQQSGQGQQGYDSPY.

Belongs to the gliadin/glutenin family. As to quaternary structure, disulfide-bridge linked aggregates.

Functionally, glutenins are high-molecular weight seed storage proteins of wheat endosperm. Thought to be responsible for the visco-elastic property of wheat dough. This Triticum aestivum (Wheat) protein is Glutenin, high molecular weight subunit PC256.